Reading from the N-terminus, the 695-residue chain is GATA zinc finger domain-containing protein 16 (695 aa).

3 disordered regions span residues 82 to 111 (SPIL…SNNA), 134 to 304 (VVNS…QQDK), and 422 to 472 (NNQF…KMRY). Low complexity-rich tracts occupy residues 87-111 (SQQQ…SNNA) and 140-149 (KTTTTNNKPP). Residues 150-174 (KQSKRKEKERLEEEKQTVAQQQQYQ) are a coiled coil. Basic and acidic residues predominate over residues 155–165 (KEKERLEEEKQ). A compositionally biased stretch (polar residues) spans 199–209 (VSTTPYGNSQF). Residues 210–298 (NNNNNNNNNN…NSNSNNNNNN (89 aa)) show a composition bias toward low complexity. A compositionally biased stretch (polar residues) spans 422–433 (NNQFSGDKQSAL). The span at 434 to 446 (NNVKNSKGGNTNN) shows a compositional bias: low complexity. The GATA-type zinc finger occupies 479–504 (CHTCGVTNTPEWRRGPNGAKTLCNAC). The disordered stretch occupies residues 523–646 (NSTGVNITEP…TTNSITTPTT (124 aa)). Low complexity-rich tracts occupy residues 544-556 (DNNN…SDSN) and 564-646 (GSNN…TPTT).

This is GATA zinc finger domain-containing protein 16 (gtaP) from Dictyostelium discoideum (Social amoeba).